Consider the following 302-residue polypeptide: NAD kinase 2 (302 aa).

Catalysis depends on Asp-78, which acts as the Proton acceptor. NAD(+)-binding positions include 78 to 79, 152 to 153, Asp-182, 193 to 198, and Ala-217; these read DG, NE, and TAYSLS.

The protein belongs to the NAD kinase family. The cofactor is a divalent metal cation.

Its subcellular location is the cytoplasm. It carries out the reaction NAD(+) + ATP = ADP + NADP(+) + H(+). In terms of biological role, involved in the regulation of the intracellular balance of NAD and NADP, and is a key enzyme in the biosynthesis of NADP. Catalyzes specifically the phosphorylation on 2'-hydroxyl of the adenosine moiety of NAD to yield NADP. This is NAD kinase 2 from Prochlorococcus marinus (strain SARG / CCMP1375 / SS120).